Consider the following 98-residue polypeptide: MSANKGWWVPPEGEDNLSKKFLRKTRESPLVPIGVAGCLVIAAYRIYRLKARGSTKLSIHLIHTRVAAQACAVGAIMLGAMYTMYRDYIKRVSEDAEK.

Residues 1–28 (MSANKGWWVPPEGEDNLSKKFLRKTRES) lie on the Cytoplasmic side of the membrane. The HIG1 domain maps to 1–94 (MSANKGWWVP…YRDYIKRVSE (94 aa)). A helical membrane pass occupies residues 29 to 46 (PLVPIGVAGCLVIAAYRI). The Extracellular segment spans residues 47–60 (YRLKARGSTKLSIH). Residues 61 to 83 (LIHTRVAAQACAVGAIMLGAMYT) form a helical membrane-spanning segment. The Cytoplasmic segment spans residues 84–98 (MYRDYIKRVSEDAEK).

The protein resides in the membrane. This chain is HIG1 domain family member 1B (Higd1b), found in Mus musculus (Mouse).